The chain runs to 249 residues: ATP synthase subunit a, chloroplastic (249 aa).

The next 5 helical transmembrane spans lie at 38-58 (AQVLITSWIVIAILLSLAVLA), 97-117 (VPFIGTMFLFIFVSNWSGALL), 136-156 (INTTVALALLTSVAYFYAGLH), 201-221 (LVVAVLISLVPLVVPIPMMFL), and 222-242 (GLFTSAIQALIFATLAAAYIG).

It belongs to the ATPase A chain family. As to quaternary structure, F-type ATPases have 2 components, CF(1) - the catalytic core - and CF(0) - the membrane proton channel. CF(1) has five subunits: alpha(3), beta(3), gamma(1), delta(1), epsilon(1). CF(0) has four main subunits: a, b, b' and c.

It localises to the plastid. Its subcellular location is the chloroplast thylakoid membrane. Functionally, key component of the proton channel; it plays a direct role in the translocation of protons across the membrane. This chain is ATP synthase subunit a, chloroplastic, found in Physcomitrium patens (Spreading-leaved earth moss).